Consider the following 714-residue polypeptide: Fatty acid oxidation complex subunit alpha (714 aa).

An enoyl-CoA hydratase region spans residues 1-190 (MEMASAFTLN…KLGLVDDVVP (190 aa)). The interval 306–714 (APLNSVGILG…FWKTTATDLQ (409 aa)) is 3-hydroxyacyl-CoA dehydrogenase.

The protein in the N-terminal section; belongs to the enoyl-CoA hydratase/isomerase family. In the central section; belongs to the 3-hydroxyacyl-CoA dehydrogenase family. Heterotetramer of two alpha chains (FadJ) and two beta chains (FadI).

It is found in the cytoplasm. The enzyme catalyses a (3S)-3-hydroxyacyl-CoA = a (2E)-enoyl-CoA + H2O. It catalyses the reaction a 4-saturated-(3S)-3-hydroxyacyl-CoA = a (3E)-enoyl-CoA + H2O. The catalysed reaction is a (3S)-3-hydroxyacyl-CoA + NAD(+) = a 3-oxoacyl-CoA + NADH + H(+). It carries out the reaction (3S)-3-hydroxybutanoyl-CoA = (3R)-3-hydroxybutanoyl-CoA. It functions in the pathway lipid metabolism; fatty acid beta-oxidation. Functionally, catalyzes the formation of a hydroxyacyl-CoA by addition of water on enoyl-CoA. Also exhibits 3-hydroxyacyl-CoA epimerase and 3-hydroxyacyl-CoA dehydrogenase activities. This chain is Fatty acid oxidation complex subunit alpha, found in Escherichia coli O17:K52:H18 (strain UMN026 / ExPEC).